The primary structure comprises 484 residues: ATP synthase subunit beta (484 aa).

169–176 (GGAGVGKT) provides a ligand contact to ATP.

The protein belongs to the ATPase alpha/beta chains family. In terms of assembly, F-type ATPases have 2 components, CF(1) - the catalytic core - and CF(0) - the membrane proton channel. CF(1) has five subunits: alpha(3), beta(3), gamma(1), delta(1), epsilon(1). CF(0) has three main subunits: a(1), b(2) and c(9-12). The alpha and beta chains form an alternating ring which encloses part of the gamma chain. CF(1) is attached to CF(0) by a central stalk formed by the gamma and epsilon chains, while a peripheral stalk is formed by the delta and b chains.

The protein localises to the cell membrane. It carries out the reaction ATP + H2O + 4 H(+)(in) = ADP + phosphate + 5 H(+)(out). Produces ATP from ADP in the presence of a proton gradient across the membrane. The catalytic sites are hosted primarily by the beta subunits. The sequence is that of ATP synthase subunit beta from Nocardioides sp. (strain ATCC BAA-499 / JS614).